The chain runs to 145 residues: 3-hydroxyacyl-[acyl-carrier-protein] dehydratase FabZ (145 aa).

The active site involves His47.

Belongs to the thioester dehydratase family. FabZ subfamily.

The protein localises to the cytoplasm. The catalysed reaction is a (3R)-hydroxyacyl-[ACP] = a (2E)-enoyl-[ACP] + H2O. Functionally, involved in unsaturated fatty acids biosynthesis. Catalyzes the dehydration of short chain beta-hydroxyacyl-ACPs and long chain saturated and unsaturated beta-hydroxyacyl-ACPs. The protein is 3-hydroxyacyl-[acyl-carrier-protein] dehydratase FabZ of Methylobacillus flagellatus (strain ATCC 51484 / DSM 6875 / VKM B-1610 / KT).